A 250-amino-acid polypeptide reads, in one-letter code: Indole-3-glycerol phosphate synthase (250 aa).

The protein belongs to the TrpC family.

The catalysed reaction is 1-(2-carboxyphenylamino)-1-deoxy-D-ribulose 5-phosphate + H(+) = (1S,2R)-1-C-(indol-3-yl)glycerol 3-phosphate + CO2 + H2O. It participates in amino-acid biosynthesis; L-tryptophan biosynthesis; L-tryptophan from chorismate: step 4/5. The sequence is that of Indole-3-glycerol phosphate synthase from Metallosphaera sedula (strain ATCC 51363 / DSM 5348 / JCM 9185 / NBRC 15509 / TH2).